Here is a 393-residue protein sequence, read N- to C-terminus: Chorismate synthase (393 aa).

NADP(+) is bound by residues Arg40 and Arg46. FMN is bound by residues 129 to 131, 251 to 252, Gly301, 316 to 320, and Arg342; these read RAS, QA, and KPIST.

This sequence belongs to the chorismate synthase family. In terms of assembly, homotetramer. It depends on FMNH2 as a cofactor.

It catalyses the reaction 5-O-(1-carboxyvinyl)-3-phosphoshikimate = chorismate + phosphate. The protein operates within metabolic intermediate biosynthesis; chorismate biosynthesis; chorismate from D-erythrose 4-phosphate and phosphoenolpyruvate: step 7/7. Catalyzes the anti-1,4-elimination of the C-3 phosphate and the C-6 proR hydrogen from 5-enolpyruvylshikimate-3-phosphate (EPSP) to yield chorismate, which is the branch point compound that serves as the starting substrate for the three terminal pathways of aromatic amino acid biosynthesis. This reaction introduces a second double bond into the aromatic ring system. This chain is Chorismate synthase, found in Koribacter versatilis (strain Ellin345).